We begin with the raw amino-acid sequence, 117 residues long: Circadian clock oscillator protein KaiB (117 aa).

The protein belongs to the KaiB family. In terms of assembly, may undergo a major conformational rearrangment; in the free state forms homooligomers. When bound to KaiC switches to a monomeric thioredoxin-fold (KaiB(fs)). The active oscillator complex is probably KaiC(6):KaiB(6).

Functionally, component of the KaiBC clock protein complex, which constitutes the main circadian regulator in cyanobacteria; it may modify the ATPase activity of KaiC. Its function is as follows. May be a metamorphic protein which reversibly switches between an inactive tetrameric fold and a rare, thioredoxin-like monomeric fold (KaiB(fs)). KaiB(fs) binds phospho-KaiC, and perhaps clock output effectors. In Prochlorococcus marinus (strain SARG / CCMP1375 / SS120), this protein is Circadian clock oscillator protein KaiB.